The following is a 265-amino-acid chain: MADS-box protein JOINTLESS (265 aa).

Positions 3–57 constitute an MADS-box domain; it reads REKIQIKKIDNSTARQVTFSKRRRGLFKKAEELSVLCDADVALIIFSSTGKLFDY. One can recognise a K-box domain in the interval 87 to 177; that stretch reads QLVENSNYSR…RQQVMEISNN (91 aa). The disordered stretch occupies residues 196 to 232; that stretch reads ENGFNNNNNEDGQSSESVTNPCNSIDPPPQDDDSSDT. The segment covering 205–218 has biased composition (polar residues); the sequence is EDGQSSESVTNPCN.

In terms of tissue distribution, widely expressed with highest levels in shoot tips and axillary buds. Also found in fully developed pedicels and flowers.

The protein resides in the nucleus. In terms of biological role, putative transcription factor that coordinates gene expression underlying the differentiation of the pedicel abscission zone. May also be involved in the maintenance of the inflorescence meristem state. This is MADS-box protein JOINTLESS (J) from Solanum lycopersicum (Tomato).